Here is a 469-residue protein sequence, read N- to C-terminus: MTQFAADKPYIVKDMSLAKWGRIEFDMAEIEMPGLMALREEYKDSQPLKGARIAGSLHMTVQTAILIETLTALGAEVRWASCNIFSTQDHAAAAIAETGVPVFATKGETLEEYWDYADAIFHWPDGETANMILDDGGDATMYLILGEKAENDPSVLNHPKSEEETFLFAQIKKRIAATPGWFAKAKAAIQGVSEETTTGVMRLYQMQKRGELPFPAINVNDSVTKSKFDNRYGCRESLVDAIRRGTDVMMAGKKALVFGYGDVGKGSAESLAGAGARVYVTEIDPICALQACMDGFEVVRAEDVIGEMDIFVTATGNKDILTVDHMRAMKDMAIVCNIGHFDNEIQVESLKNYQWTNVKPQVDLVNFPEGHRIILLSEGRLVNLGNATGHPSFVMSASFTNQTLAQIELWTKGENYTNEVYILPKHLDEKVAALHLDKLGAKLTVLSDEQADYIGVPQHGPFKAEHYRY.

Positions 60, 135, and 195 each coordinate substrate. Residue threonine 196–threonine 198 participates in NAD(+) binding. Positions 225 and 229 each coordinate substrate. Residues asparagine 230, glycine 259–glycine 264, glutamate 282, asparagine 317, isoleucine 338–histidine 340, and asparagine 383 contribute to the NAD(+) site.

It belongs to the adenosylhomocysteinase family. Requires NAD(+) as cofactor.

Its subcellular location is the cytoplasm. The catalysed reaction is S-adenosyl-L-homocysteine + H2O = L-homocysteine + adenosine. It participates in amino-acid biosynthesis; L-homocysteine biosynthesis; L-homocysteine from S-adenosyl-L-homocysteine: step 1/1. May play a key role in the regulation of the intracellular concentration of adenosylhomocysteine. The chain is Adenosylhomocysteinase from Maricaulis maris (strain MCS10) (Caulobacter maris).